The sequence spans 484 residues: Sulfoacetaldehyde dehydrogenase (484 aa).

NAD(+)-binding positions include 105–110, glycine 188, and glycine 206; that span reads LTPVTN. The active-site Nucleophile is cysteine 239. 2 residues coordinate NAD(+): glutamate 332 and leucine 412.

Belongs to the aldehyde dehydrogenase family.

It carries out the reaction sulfoacetaldehyde + NAD(+) + CoA = sulfoacetyl-CoA + NADH + H(+). Its function is as follows. Part of a variant of the sulfo-TK pathway, a D-sulfoquinovose degradation pathway that produces sulfoacetate. Catalyzes the oxidation of sulfoacetaldehyde (SA) to sulfoacetyl-coenzyme A (sulfoacetyl-CoA). Is highly specific for NAD(+), with only residual (1%) activity with NADP(+). Cannot use acetaldehyde. This Acholeplasma sp protein is Sulfoacetaldehyde dehydrogenase.